The chain runs to 698 residues: Superoxide-generating NADPH oxidase heavy chain subunit B (698 aa).

Disordered regions lie at residues 1–68 (MNEK…NITP) and 134–158 (NDQV…NNKN). Residues 1–184 (MNEKKELQQE…KIRGWWWHRG (184 aa)) lie on the Cytoplasmic side of the membrane. Composition is skewed to polar residues over residues 16–25 (FQTPKNQQLE) and 33–53 (EISS…PISQ). Composition is skewed to low complexity over residues 54–65 (NDNSNNENESLN) and 138–156 (NSNT…TNNN). The helical transmembrane segment at 185 to 205 (ISTYIMLFYIALNIGVGVHMF) threads the bilayer. The Extracellular portion of the chain corresponds to 206 to 229 (YNMYHSDIFKFLGLSFCFSRTAAR). The Ferric oxidoreductase domain occupies 225 to 375 (RTAARLINLN…LFIPFYILLC (151 aa)). A helical transmembrane segment spans residues 230-250 (LINLNSAVILLPVLRNFLSWL). At 251 to 269 (RGTIVNNYIPIDKHLNFHK) the chain is on the cytoplasmic side. Positions 268 and 282 each coordinate heme. A helical membrane pass occupies residues 270 to 290 (LCAFMLFCCTIIHCVGHYISF). The Extracellular segment spans residues 291–324 (KKINDDVLKIDDGKSVAGDYLNININNFPDEKYL). A helical transmembrane segment spans residues 325 to 345 (FFKSVPGITGHIMLLILILIV). At 346–355 (SSSMWRIRRP) the chain is on the cytoplasmic side. The helical transmembrane segment at 356–376 (MFEIFWYVHHLFIPFYILLCF) threads the bilayer. Heme-binding residues include His-364 and His-377. Over 377–388 (HGYSKILKKDPQ) the chain is Extracellular. The helical transmembrane segment at 389–409 (SWMWIIAPFILYSIERLIRIA) threads the bilayer. The 125-residue stretch at 404–528 (RLIRIARSKK…DGPFGAPAEN (125 aa)) folds into the FAD-binding FR-type domain. Over 410–698 (RSKKRVILEK…CHLIFHKENF (289 aa)) the chain is Cytoplasmic. 460–466 (HPFTITS) provides a ligand contact to FAD.

In terms of assembly, composed of a heavy chain and a light chain. Requires FAD as cofactor.

Its subcellular location is the membrane. Critical component of the membrane-bound oxidase that generates superoxide. It is the terminal component of a respiratory chain that transfers single electrons from cytoplasmic NADPH across the plasma membrane to molecular oxygen on the exterior. The polypeptide is Superoxide-generating NADPH oxidase heavy chain subunit B (noxB) (Dictyostelium discoideum (Social amoeba)).